Here is a 663-residue protein sequence, read N- to C-terminus: UvrABC system protein B (663 aa).

The Helicase ATP-binding domain occupies Asp-31–Glu-271. Residue Gly-44–Thr-51 coordinates ATP. The Beta-hairpin signature appears at Tyr-97–Val-120. The 167-residue stretch at Gln-435–Ile-601 folds into the Helicase C-terminal domain. Residues Gln-627–Met-662 form the UVR domain.

Belongs to the UvrB family. As to quaternary structure, forms a heterotetramer with UvrA during the search for lesions. Interacts with UvrC in an incision complex.

The protein resides in the cytoplasm. The UvrABC repair system catalyzes the recognition and processing of DNA lesions. A damage recognition complex composed of 2 UvrA and 2 UvrB subunits scans DNA for abnormalities. Upon binding of the UvrA(2)B(2) complex to a putative damaged site, the DNA wraps around one UvrB monomer. DNA wrap is dependent on ATP binding by UvrB and probably causes local melting of the DNA helix, facilitating insertion of UvrB beta-hairpin between the DNA strands. Then UvrB probes one DNA strand for the presence of a lesion. If a lesion is found the UvrA subunits dissociate and the UvrB-DNA preincision complex is formed. This complex is subsequently bound by UvrC and the second UvrB is released. If no lesion is found, the DNA wraps around the other UvrB subunit that will check the other stand for damage. The polypeptide is UvrABC system protein B (Streptococcus uberis (strain ATCC BAA-854 / 0140J)).